Reading from the N-terminus, the 469-residue chain is GDP-fucose protein O-fucosyltransferase 3 (469 aa).

The Cytoplasmic segment spans residues 1 to 9; it reads MVNRIWEKR. A helical; Signal-anchor for type II membrane protein membrane pass occupies residues 10-30; it reads FWISCFFIIFLFILVIFQVMV. Topologically, residues 31–469 are lumenal; the sequence is ELGRFEKKET…EFWNLVFKFW (439 aa). Residues asparagine 100, asparagine 158, asparagine 308, and asparagine 333 are each glycosylated (N-linked (GlcNAc...) asparagine). The cysteines at positions 379 and 382 are disulfide-linked. N-linked (GlcNAc...) asparagine glycosylation is present at asparagine 455.

Belongs to the glycosyltransferase 10 family.

It is found in the endoplasmic reticulum membrane. It catalyses the reaction L-threonyl-[protein] + GDP-beta-L-fucose = 3-O-(alpha-L-fucosyl)-L-threonyl-[protein] + GDP + H(+). The catalysed reaction is L-seryl-[protein] + GDP-beta-L-fucose = 3-O-(alpha-L-fucosyl)-L-seryl-[protein] + GDP + H(+). It functions in the pathway protein modification; protein glycosylation. Functionally, protein O-fucosyltransferase that specifically catalyzes O-fucosylation of serine or threonine residues in EMI domains of target proteins. Attaches fucose through an O-glycosidic linkage. O-fucosylation of EMI domain-containing proteins may be required for facilitating protein folding and secretion. This chain is GDP-fucose protein O-fucosyltransferase 3 (fut10), found in Xenopus laevis (African clawed frog).